We begin with the raw amino-acid sequence, 91 residues long: UPF0358 protein SSP1677 (91 aa).

Belongs to the UPF0358 family.

In Staphylococcus saprophyticus subsp. saprophyticus (strain ATCC 15305 / DSM 20229 / NCIMB 8711 / NCTC 7292 / S-41), this protein is UPF0358 protein SSP1677.